A 229-amino-acid polypeptide reads, in one-letter code: Lipoprotein-releasing system ATP-binding protein LolD (229 aa).

An ABC transporter domain is found at 7–229 (LQCINLTKSF…KNGQLFNNKN (223 aa)). 43-50 (GKSGSGKS) contributes to the ATP binding site.

This sequence belongs to the ABC transporter superfamily. Lipoprotein translocase (TC 3.A.1.125) family. As to quaternary structure, the complex is composed of two ATP-binding proteins (LolD) and two transmembrane proteins (LolC and LolE).

It localises to the cell inner membrane. Functionally, part of the ABC transporter complex LolCDE involved in the translocation of mature outer membrane-directed lipoproteins, from the inner membrane to the periplasmic chaperone, LolA. Responsible for the formation of the LolA-lipoprotein complex in an ATP-dependent manner. The polypeptide is Lipoprotein-releasing system ATP-binding protein LolD (Buchnera aphidicola subsp. Schizaphis graminum (strain Sg)).